A 99-amino-acid polypeptide reads, in one-letter code: uncharacterized protein (99 aa).

Residues 6-26 (LVCSIVFILFILFYDLKIGTI) form a helical membrane-spanning segment. The 48-residue stretch at 48–95 (KTVKVKPGDTVMSIVGSAGSPDDIVKDFEALNPNVKANAIQAGTAYKF) folds into the LysM domain.

It is found in the secreted. The protein resides in the cell wall. The protein localises to the membrane. This is an uncharacterized protein from Bacillus subtilis (strain 168).